Consider the following 429-residue polypeptide: tRNA-2-methylthio-N(6)-dimethylallyladenosine synthase (429 aa).

Positions 1–110 (MKFFIKTYGC…IPEAVELSIK (110 aa)) constitute an MTTase N-terminal domain. 6 residues coordinate [4Fe-4S] cluster: Cys10, Cys46, Cys75, Cys146, Cys150, and Cys153. Residues 132-364 (RNSKHHAWIT…NLQKEINKML (233 aa)) form the Radical SAM core domain. The TRAM domain occupies 366-427 (ESYLDKTVEV…AGPLYGDIIK (62 aa)).

This sequence belongs to the methylthiotransferase family. MiaB subfamily. In terms of assembly, monomer. Requires [4Fe-4S] cluster as cofactor.

The protein localises to the cytoplasm. The enzyme catalyses N(6)-dimethylallyladenosine(37) in tRNA + (sulfur carrier)-SH + AH2 + 2 S-adenosyl-L-methionine = 2-methylsulfanyl-N(6)-dimethylallyladenosine(37) in tRNA + (sulfur carrier)-H + 5'-deoxyadenosine + L-methionine + A + S-adenosyl-L-homocysteine + 2 H(+). In terms of biological role, catalyzes the methylthiolation of N6-(dimethylallyl)adenosine (i(6)A), leading to the formation of 2-methylthio-N6-(dimethylallyl)adenosine (ms(2)i(6)A) at position 37 in tRNAs that read codons beginning with uridine. The chain is tRNA-2-methylthio-N(6)-dimethylallyladenosine synthase from Thermosipho africanus (strain TCF52B).